The primary structure comprises 82 residues: ATP synthase subunit c (82 aa).

2 helical membrane-spanning segments follow: residues 6-26 and 57-77; these read AAAS…GPGI and LAFM…LLFA.

This sequence belongs to the ATPase C chain family. F-type ATPases have 2 components, F(1) - the catalytic core - and F(0) - the membrane proton channel. F(1) has five subunits: alpha(3), beta(3), gamma(1), delta(1), epsilon(1). F(0) has four main subunits: a(1), b(1), b'(1) and c(10-14). The alpha and beta chains form an alternating ring which encloses part of the gamma chain. F(1) is attached to F(0) by a central stalk formed by the gamma and epsilon chains, while a peripheral stalk is formed by the delta, b and b' chains.

It is found in the cell inner membrane. F(1)F(0) ATP synthase produces ATP from ADP in the presence of a proton or sodium gradient. F-type ATPases consist of two structural domains, F(1) containing the extramembraneous catalytic core and F(0) containing the membrane proton channel, linked together by a central stalk and a peripheral stalk. During catalysis, ATP synthesis in the catalytic domain of F(1) is coupled via a rotary mechanism of the central stalk subunits to proton translocation. Its function is as follows. Key component of the F(0) channel; it plays a direct role in translocation across the membrane. A homomeric c-ring of between 10-14 subunits forms the central stalk rotor element with the F(1) delta and epsilon subunits. In Gloeobacter violaceus (strain ATCC 29082 / PCC 7421), this protein is ATP synthase subunit c.